The sequence spans 350 residues: MIKTDILIIGAGPTGLFAVFEAGLLKLKCHILDALPQPGGQLSELYPKKPIYDIPGFPEVLAGDLVDGLMEQIKQFEPGFTLGERAETVEKQEDGTFIVTSNKGTKFHAPVIAIAGGLGSFEPRKPLIEDIEFYEDKGVKYFIKNPEKFRDKRVVIAGGGDSALDWSIFLANVASEVTLIHRRNEFRGALDSVEKVQELKSAGKIKLITPAEVIGINGAEHVESLDIEENGAHRKIECDYFIPLFGLTPKLGPIGDWGLEIEKNAIKVNNALDYQTNIPGIFAIGDVNTYPGKLKLILCGFHEATLMCQAAYGIINPGKKYVLKYTTVSGVDGFDGTRKEAPKAVVKAIV.

The FAD site is built by threonine 14, aspartate 33, glutamine 41, tyrosine 46, alanine 86, phenylalanine 121, aspartate 286, and threonine 327.

It belongs to the ferredoxin--NADP reductase type 2 family. As to quaternary structure, homodimer. The cofactor is FAD.

It catalyses the reaction 2 reduced [2Fe-2S]-[ferredoxin] + NADP(+) + H(+) = 2 oxidized [2Fe-2S]-[ferredoxin] + NADPH. This chain is Ferredoxin--NADP reductase, found in Flavobacterium johnsoniae (strain ATCC 17061 / DSM 2064 / JCM 8514 / BCRC 14874 / CCUG 350202 / NBRC 14942 / NCIMB 11054 / UW101) (Cytophaga johnsonae).